We begin with the raw amino-acid sequence, 416 residues long: Chaperone protein dnaJ A6 (416 aa).

The 62-residue stretch at 12–73 folds into the J domain; it reads KYYEVLGVPK…EKRDIYDQYG (62 aa). The CR-type zinc finger occupies 133–217; sequence GSMKKLSLSR…CRASKVIQEK (85 aa). Zn(2+) is bound by residues cysteine 146, cysteine 149, cysteine 162, cysteine 165, cysteine 189, cysteine 192, cysteine 205, and cysteine 208. 3 CXXCXGXG motif repeats span residues 146 to 153, 162 to 169, and 189 to 196; these read CPKCKGKG, CYGCHGVG, and CPECRGSG. Over residues 380–399 the composition is skewed to basic and acidic residues; that stretch reads HDVNIEEEMRRKQYQRKQEA. The tract at residues 380 to 416 is disordered; sequence HDVNIEEEMRRKQYQRKQEAYDEDEEEDAPRVQCAQQ.

Belongs to the DnaJ family. Interacts with ZFP1.

The protein localises to the nucleus. It localises to the cytoplasm. Its function is as follows. Involved in disease resistance. Acts as a negative regulator of innate immunity to the rice blast fungus (Magnaporthe oryzae). Acts as a negative regulator of the pathogen-associated molecular pattern (PAMP)-triggered immunity (PTI) response through the inhibition of reactive oxygen species (ROS) accumulation and expression of defense-related genes. May function via the ubiquitin-proteasome degradation pathway. The protein is Chaperone protein dnaJ A6 of Oryza sativa subsp. japonica (Rice).